Consider the following 426-residue polypeptide: Histidine--tRNA ligase (426 aa).

This sequence belongs to the class-II aminoacyl-tRNA synthetase family. Homodimer.

Its subcellular location is the cytoplasm. The catalysed reaction is tRNA(His) + L-histidine + ATP = L-histidyl-tRNA(His) + AMP + diphosphate + H(+). This chain is Histidine--tRNA ligase, found in Streptococcus pyogenes serotype M5 (strain Manfredo).